Consider the following 543-residue polypeptide: Cytochrome P450 307a1 (543 aa).

Position 219 is a phosphoserine (S219). The interval 440-460 (FLEPSKEQSPKNSKGSDSGIE) is disordered. A compositionally biased stretch (polar residues) spans 449-460 (PKNSKGSDSGIE). C485 contributes to the heme binding site.

This sequence belongs to the cytochrome P450 family. The cofactor is heme.

It is found in the endoplasmic reticulum membrane. The protein resides in the microsome membrane. Functionally, required for correct development of the embryonic midline glial cells which are necessary for the formation of distinct segmental commissures. The protein is Cytochrome P450 307a1 (spo) of Drosophila melanogaster (Fruit fly).